The following is a 1369-amino-acid chain: Neurofascin (1369 aa).

The signal sequence occupies residues 1–25 (MVLHSHQLTYAGIAFALCLHHLISA). The Extracellular segment spans residues 26–1235 (IEVPLDSNIQ…NHVDIATQGW (1210 aa)). 2 Ig-like C2-type domains span residues 42 to 138 (PTIT…LQVS) and 144 to 231 (PKEK…NPYT). 2 disulfide bridges follow: Cys-64–Cys-119 and Cys-163–Cys-214. 3 N-linked (GlcNAc...) asparagine glycosylation sites follow: Asn-241, Asn-247, and Asn-323. 4 consecutive Ig-like C2-type domains span residues 262 to 350 (PSFM…ISVR), 355 to 442 (PYWL…AFVS), 448 to 535 (PRIL…VRLE), and 539 to 626 (PTRI…AYLT). Disulfide bonds link Cys-286-Cys-334 and Cys-376-Cys-426. N-linked (GlcNAc...) asparagine glycans are attached at residues Asn-427, Asn-464, and Asn-501. 2 disulfides stabilise this stretch: Cys-470–Cys-519 and Cys-561–Cys-610. Fibronectin type-III domains are found at residues 645 to 740 (RPRD…TSGA), 745 to 838 (NPTG…SGED), 843 to 945 (APTD…TPEG), and 949 to 1057 (SPRY…TPAS). Asn-692 carries an N-linked (GlcNAc...) asparagine glycan. Over residues 730–739 (MPSERYQTSG) the composition is skewed to polar residues. Residues 730–753 (MPSERYQTSGARPEINPTGVQGAG) are disordered. N-linked (GlcNAc...) asparagine glycosylation is found at Asn-767, Asn-793, Asn-853, Asn-994, and Asn-1009. The disordered stretch occupies residues 1078–1097 (TTATPTTETPPTEIPTTAIP). 4 N-linked (GlcNAc...) asparagine glycosylation sites follow: Asn-1133, Asn-1150, Asn-1156, and Asn-1171. The 90-residue stretch at 1133–1222 (NGSSIWDIRA…SYITFTTSSA (90 aa)) folds into the Fibronectin type-III 5 domain. The helical transmembrane segment at 1236 to 1256 (FIGLMCAIALLVLILLIVCFI) threads the bilayer. Residues 1257–1369 (KRSRGGKYPV…SPVNAIYSLA (113 aa)) lie on the Cytoplasmic side of the membrane. Basic and acidic residues-rich tracts occupy residues 1266–1282 (VRDN…KNVE) and 1289–1298 (RSLESDEDNK). The interval 1266–1369 (VRDNKDEHLN…SPVNAIYSLA (104 aa)) is disordered. A compositionally biased stretch (polar residues) spans 1300 to 1313 (LPNSQTSLDGTIKQ).

This sequence belongs to the immunoglobulin superfamily. L1/neurofascin/NgCAM family. N-glycosylated and O-glycosylated. Post-translationally, may be proteolytically cleaved at Arg-636.

Its subcellular location is the cell membrane. In terms of biological role, cell adhesion, ankyrin-binding protein which may be involved in neurite extension, axonal guidance, synaptogenesis, myelination and neuron-glial cell interactions. This Gallus gallus (Chicken) protein is Neurofascin (NFASC).